Here is a 62-residue protein sequence, read N- to C-terminus: Large ribosomal subunit protein bL28 (62 aa).

This sequence belongs to the bacterial ribosomal protein bL28 family.

The polypeptide is Large ribosomal subunit protein bL28 (Aster yellows witches'-broom phytoplasma (strain AYWB)).